We begin with the raw amino-acid sequence, 310 residues long: MTAQKIRIATRHSPLAMWQANFIKSELLKYHPNLIVELLPMKTKGDIILDTPLAKVGGKGLFVKELEVAILEGRADIAVHSIKDVPVDFPEGLGLTTICKREDPHDAFVSNHYKQLDELPEGAIVGTCSLRRQCQILALRPDIIIKNLRGNVNTRLRKLDEGEYDAIILAAAGLMRLEMQHRITSLIAPEVSLPAVGQGAVGIECRLDDEQTITLLKPLEDPETRIRITAERAMNLKLQGGCQVPIGSFAILENEQLFLRGLVGSVDGKQIIRKEITGHQNDAQQLGITLAEQLLACGAEEILAEVYKNQ.

Cys242 carries the post-translational modification S-(dipyrrolylmethanemethyl)cysteine.

This sequence belongs to the HMBS family. As to quaternary structure, monomer. Dipyrromethane is required as a cofactor.

It carries out the reaction 4 porphobilinogen + H2O = hydroxymethylbilane + 4 NH4(+). It functions in the pathway porphyrin-containing compound metabolism; protoporphyrin-IX biosynthesis; coproporphyrinogen-III from 5-aminolevulinate: step 2/4. Its function is as follows. Tetrapolymerization of the monopyrrole PBG into the hydroxymethylbilane pre-uroporphyrinogen in several discrete steps. The protein is Porphobilinogen deaminase of Psychromonas ingrahamii (strain DSM 17664 / CCUG 51855 / 37).